Here is a 214-residue protein sequence, read N- to C-terminus: Pyridoxine/pyridoxamine 5'-phosphate oxidase (214 aa).

Substrate-binding positions include 8–11 and lysine 66; that span reads RTNY. FMN is bound by residues 61–66, 76–77, arginine 82, lysine 83, and glutamine 105; these read RIVLIK and FT. Positions 123, 127, and 131 each coordinate substrate. FMN-binding positions include 140-141 and tryptophan 184; that span reads QS. A substrate-binding site is contributed by 190–192; that stretch reads RLH. Arginine 194 is a binding site for FMN.

This sequence belongs to the pyridoxamine 5'-phosphate oxidase family. Homodimer. Requires FMN as cofactor.

It catalyses the reaction pyridoxamine 5'-phosphate + O2 + H2O = pyridoxal 5'-phosphate + H2O2 + NH4(+). The enzyme catalyses pyridoxine 5'-phosphate + O2 = pyridoxal 5'-phosphate + H2O2. It participates in cofactor metabolism; pyridoxal 5'-phosphate salvage; pyridoxal 5'-phosphate from pyridoxamine 5'-phosphate: step 1/1. It functions in the pathway cofactor metabolism; pyridoxal 5'-phosphate salvage; pyridoxal 5'-phosphate from pyridoxine 5'-phosphate: step 1/1. Catalyzes the oxidation of either pyridoxine 5'-phosphate (PNP) or pyridoxamine 5'-phosphate (PMP) into pyridoxal 5'-phosphate (PLP). The chain is Pyridoxine/pyridoxamine 5'-phosphate oxidase from Burkholderia mallei (strain NCTC 10247).